Here is a 429-residue protein sequence, read N- to C-terminus: Adenylosuccinate synthetase (429 aa).

Residues Gly-12–Lys-18 and Gly-40–Thr-42 each bind GTP. Residue Asp-13 is the Proton acceptor of the active site. Mg(2+) is bound by residues Asp-13 and Gly-40. IMP-binding positions include Asp-13–Lys-16, Asn-38–His-41, Thr-129, Arg-143, Gln-223, Thr-238, and Arg-302. His-41 functions as the Proton donor in the catalytic mechanism. Thr-298–Arg-304 is a binding site for substrate. GTP is bound by residues Arg-304, Lys-330–Asp-332, and Ser-412–Ser-414.

Belongs to the adenylosuccinate synthetase family. In terms of assembly, homodimer. Mg(2+) is required as a cofactor.

It localises to the cytoplasm. The catalysed reaction is IMP + L-aspartate + GTP = N(6)-(1,2-dicarboxyethyl)-AMP + GDP + phosphate + 2 H(+). The protein operates within purine metabolism; AMP biosynthesis via de novo pathway; AMP from IMP: step 1/2. Plays an important role in the de novo pathway of purine nucleotide biosynthesis. Catalyzes the first committed step in the biosynthesis of AMP from IMP. In Paramagnetospirillum magneticum (strain ATCC 700264 / AMB-1) (Magnetospirillum magneticum), this protein is Adenylosuccinate synthetase.